The chain runs to 215 residues: ER lumen protein-retaining receptor B (215 aa).

A run of 6 helical transmembrane segments spans residues 6 to 26 (LAGDMTHLASVLVLLLKIHTI), 55 to 77 (FVSLYNTSMKLVFLGSSFSIVWY), 98 to 118 (WFLVLPCFLLALLIHEKFTFL), 120 to 140 (VLWTSSLYLEAVAILPQLVLL), 149 to 169 (LTGQYIFLLGGYRGLYILNWI), and 178 to 198 (FVHWITWIAGFVQTLLYADFF).

It belongs to the ERD2 family.

The protein resides in the golgi apparatus membrane. Its subcellular location is the endoplasmic reticulum membrane. Its function is as follows. Determines the specificity of the luminal endoplasmic reticulum protein retention system. Required for the retro-transport of calreticulin-3 (CRT3) from the Golgi to the ER. Specifically required for elongation factor Tu receptor (EFR) function in response to the pathogen-associated molecular pattern (PAMP) elf18. This chain is ER lumen protein-retaining receptor B (ERD2B), found in Arabidopsis thaliana (Mouse-ear cress).